Consider the following 627-residue polypeptide: Anti-CBASS protein Acb1 (627 aa).

Y105 lines the 3',3'-cGAMP pocket. Y105 provides a ligand contact to 3',3'-cUAMP. The tract at residues 437 to 474 (LADQPETESANENTEQPESGEEGEEGQPTRRAANDAKP) is disordered. Residues H508, T510, H584, and T586 contribute to the active site. 3',3'-cGAMP is bound by residues E614 and W620. Positions 614 and 620 each coordinate 3',3'-cUAMP.

Belongs to the anti-CBASS protein Acb1 family.

It carries out the reaction 3',3'-cUAMP + H2O = U[3'-5']pAp[3'] + H(+). It catalyses the reaction 3',3',3'-c-tri-AMP + H2O = A[3'-5']pA[3'-5']pAp[3'] + H(+). The catalysed reaction is 3',3',3'-cAAG + H2O = G[3'-5']pA[3'-5']pAp[3'] + H(+). The enzyme catalyses 3',3',3'-cAAG + H2O = A[3'-5']pG[3'-5']pAp[3'] + H(+). It carries out the reaction 3',3'-cGAMP + H2O = G[3'-5']pAp[3'] + H(+). In terms of biological role, counteracts or regulates the endogenous CBASS antiviral defense system. Phosphodiesterase that enables metal-independent hydrolysis of the host cyclic di- and trinucleotide CBASS signals such as 3'3'-cGAMP, 3'3'cUA, and 3'3'3'-cAAA. This chain is Anti-CBASS protein Acb1, found in Caulobacter sp. (strain RHG1).